A 1384-amino-acid polypeptide reads, in one-letter code: Hepatocyte growth factor receptor (1384 aa).

An N-terminal signal peptide occupies residues 1–24 (MKAPAVLAPGILVLLFTFVQKSNG). At 25 to 933 (ECKEALVKSR…VIVQPDQNFT (909 aa)) the chain is on the extracellular side. The Sema domain maps to 27–516 (KEALVKSRMN…TGKKITKIPL (490 aa)). Asn45 carries an N-linked (GlcNAc...) asparagine glycan. 4 disulfides stabilise this stretch: Cys95–Cys101, Cys98–Cys160, Cys133–Cys141, and Cys173–Cys176. The N-linked (GlcNAc...) asparagine glycan is linked to Asn106. An N-linked (GlcNAc...) asparagine glycan is attached at Asn149. Asn203 and Asn359 each carry an N-linked (GlcNAc...) asparagine glycan. 2 disulfides stabilise this stretch: Cys299-Cys364 and Cys386-Cys398. N-linked (GlcNAc...) asparagine glycosylation is found at Asn400 and Asn406. 4 cysteine pairs are disulfide-bonded: Cys521–Cys539, Cys527–Cys562, Cys530–Cys546, and Cys542–Cys552. 3 consecutive IPT/TIG domains span residues 564–656 (PTIY…FSYV), 658–740 (PIIT…FIYR), and 743–837 (PIVY…LIYV). The O-linked (Man) threonine glycan is linked to Thr583. Residues Asn608 and Asn636 are each glycosylated (N-linked (GlcNAc...) asparagine). 2 O-linked (Man) threonine glycosylation sites follow: Thr677 and Thr762. Residues Asn786, Asn880, and Asn931 are each glycosylated (N-linked (GlcNAc...) asparagine). The helical transmembrane segment at 934–956 (GLIVGVVSVSIILLLLLGLFLWL) threads the bilayer. Residues 957–1384 (KKRKQIKDLG…NVSGEDDDDT (428 aa)) lie on the Cytoplasmic side of the membrane. A Phosphoserine modification is found at Ser967. Residue Thr978 is modified to Phosphothreonine. Ser991, Ser998, and Ser1001 each carry phosphoserine. Tyr1004 carries the phosphotyrosine modification. The 268-residue stretch at 1079 to 1346 (VHFNEVIGRG…RIAAIFSAFI (268 aa)) folds into the Protein kinase domain. Residues 1085 to 1093 (IGRGHFGCV) and Lys1111 contribute to the ATP site. The active-site Proton acceptor is Asp1205. Residues 1213–1382 (LDEKFTVKVA…QENVSGEDDD (170 aa)) form an interaction with RANBP9 region. Phosphotyrosine is present on Tyr1231. Tyr1235 and Tyr1236 each carry phosphotyrosine; by autocatalysis. Thr1290 carries the post-translational modification Phosphothreonine. Positions 1321 to 1360 (WHPKAELRPSFSELVSRIAAIFSAFIGEHYVHVNATYVNV) are interaction with MUC20. Tyr1350 and Tyr1357 each carry phosphotyrosine; by autocatalysis. Tyr1366 is subject to Phosphotyrosine.

It belongs to the protein kinase superfamily. Tyr protein kinase family. In terms of assembly, heterodimer made of an alpha chain (50 kDa) and a beta chain (145 kDa) which are disulfide linked. Binds PLXNB1. Interacts when phosphorylated with downstream effectors including STAT3, PIK3R1, SRC, PCLG1, GRB2 and GAB1. Interacts with SPSB1, SPSB2 and SPSB4. Interacts with INPP5D/SHIP1. When phosphorylated at Tyr-1357, interacts with INPPL1/SHIP2. Interacts with RANBP9 and RANBP10, as well as SPSB1, SPSB2, SPSB3 and SPSB4. SPSB1 binding occurs in the presence and in the absence of HGF, however HGF treatment has a positive effect on this interaction. Interacts with MUC20; prevents interaction with GRB2 and suppresses hepatocyte growth factor-induced cell proliferation. Interacts with GRB10. Interacts with PTPN1 and PTPN2. Interacts with HSP90AA1 and HSP90AB1; the interaction suppresses MET kinase activity. Interacts with tensin TNS3. Interacts (when phosphorylated) with tensin TNS4 (via SH2 domain); the interaction increases MET protein stability by inhibiting MET endocytosis and subsequent lysosomal degradation. Autophosphorylated in response to ligand binding on Tyr-1235 and Tyr-1236 in the kinase domain leading to further phosphorylation of Tyr-1350 and Tyr-1357 in the C-terminal multifunctional docking site. Dephosphorylated by PTPRJ at Tyr-1350 and Tyr-1366. Dephosphorylated by PTPN1 and PTPN2. Post-translationally, ubiquitinated. Ubiquitination by CBL regulates the receptor stability and activity through proteasomal degradation. In terms of processing, O-mannosylation of IPT/TIG domains by TMEM260 is required for protein maturation. O-mannosylated residues are composed of single mannose glycans that are not elongated or modified.

Its subcellular location is the membrane. The enzyme catalyses L-tyrosyl-[protein] + ATP = O-phospho-L-tyrosyl-[protein] + ADP + H(+). In its inactive state, the C-terminal tail interacts with the catalytic domain and inhibits the kinase activity. Upon ligand binding, the C-terminal tail is displaced and becomes phosphorylated, thus increasing the kinase activity. Receptor tyrosine kinase that transduces signals from the extracellular matrix into the cytoplasm by binding to hepatocyte growth factor/HGF ligand. Regulates many physiological processes including proliferation, scattering, morphogenesis and survival. Ligand binding at the cell surface induces autophosphorylation of MET on its intracellular domain that provides docking sites for downstream signaling molecules. Following activation by ligand, interacts with the PI3-kinase subunit PIK3R1, PLCG1, SRC, GRB2, STAT3 or the adapter GAB1. Recruitment of these downstream effectors by MET leads to the activation of several signaling cascades including the RAS-ERK, PI3 kinase-AKT, or PLCgamma-PKC. The RAS-ERK activation is associated with the morphogenetic effects while PI3K/AKT coordinates prosurvival effects. During embryonic development, MET signaling plays a role in gastrulation, development and migration of muscles and neuronal precursors, angiogenesis and kidney formation. In adults, participates in wound healing as well as organ regeneration and tissue remodeling. Also promotes differentiation and proliferation of hematopoietic cells. This chain is Hepatocyte growth factor receptor (MET), found in Ovis aries (Sheep).